We begin with the raw amino-acid sequence, 509 residues long: Maturase K (509 aa).

The protein belongs to the intron maturase 2 family. MatK subfamily.

The protein resides in the plastid. The protein localises to the chloroplast. Its function is as follows. Usually encoded in the trnK tRNA gene intron. Probably assists in splicing its own and other chloroplast group II introns. This is Maturase K from Citrus sinensis (Sweet orange).